Here is a 190-residue protein sequence, read N- to C-terminus: 3-isopropylmalate dehydratase small subunit (190 aa).

This sequence belongs to the LeuD family. LeuD type 1 subfamily. As to quaternary structure, heterodimer of LeuC and LeuD.

It catalyses the reaction (2R,3S)-3-isopropylmalate = (2S)-2-isopropylmalate. The protein operates within amino-acid biosynthesis; L-leucine biosynthesis; L-leucine from 3-methyl-2-oxobutanoate: step 2/4. In terms of biological role, catalyzes the isomerization between 2-isopropylmalate and 3-isopropylmalate, via the formation of 2-isopropylmaleate. The chain is 3-isopropylmalate dehydratase small subunit from Staphylococcus aureus (strain USA300).